We begin with the raw amino-acid sequence, 461 residues long: mRNA cap guanine-N(7) methyltransferase (461 aa).

The segment at 1–117 is disordered; that stretch reads MESSVKASVD…RKLQPQDALE (117 aa). Phosphoserine is present on residues serine 11, serine 15, serine 16, and serine 58. 2 stretches are compositionally biased toward polar residues: residues 14-29 and 49-58; these read ESSPGVNETAAASGQR and EQNSSYVQDS. A compositionally biased stretch (basic and acidic residues) spans 65 to 93; the sequence is LDVEIILDEKHSEDDGGASKRSKLERGGG. A phosphoserine mark is found at serine 94 and serine 99. The Nuclear localization signal signature appears at 107-109; sequence KRK. Residues 152-460 enclose the mRNA cap 0 methyltransferase domain; sequence SRIFYLRNFN…IYLVFAFEKQ (309 aa). 161–162 provides a ligand contact to mRNA; that stretch reads NN. Positions 165, 190, 212, 246, 269, and 274 each coordinate S-adenosyl-L-methionine.

It belongs to the class I-like SAM-binding methyltransferase superfamily. mRNA cap 0 methyltransferase family. As to quaternary structure, interacts with importin alpha, leading to stimulate both RNA-binding and methyltransferase activity. Interaction with importin alpha and beta is required for its nuclear localization, importin beta dissociating in response to RanGTP, allowing RNMT-importin alpha to bind RNA substrates. Interacts with elongating form of polymerase II and RNGTT. Interacts with RAMAC, this interaction significantly enhances RNA-binding and cap methyltransferase activity.

Its subcellular location is the nucleus. The enzyme catalyses a 5'-end (5'-triphosphoguanosine)-ribonucleoside in mRNA + S-adenosyl-L-methionine = a 5'-end (N(7)-methyl 5'-triphosphoguanosine)-ribonucleoside in mRNA + S-adenosyl-L-homocysteine. Its activity is regulated as follows. Methyltransferase activity is activated by RAMAC. Catalytic subunit of the mRNA-capping methyltransferase RNMT:RAMAC complex that methylates the N7 position of the added guanosine to the 5'-cap structure of mRNAs. Binds RNA containing 5'-terminal GpppC. This chain is mRNA cap guanine-N(7) methyltransferase (Rnmt), found in Rattus norvegicus (Rat).